Here is a 203-residue protein sequence, read N- to C-terminus: Acireductone dioxygenase 3 (203 aa).

Fe(2+) contacts are provided by His96, His98, Glu102, and His141. 4 residues coordinate Ni(2+): His96, His98, Glu102, and His141.

Belongs to the acireductone dioxygenase (ARD) family. Fe(2+) serves as cofactor. Ni(2+) is required as a cofactor.

The protein localises to the cytoplasm. It localises to the nucleus. The catalysed reaction is 1,2-dihydroxy-5-(methylsulfanyl)pent-1-en-3-one + O2 = 4-methylsulfanyl-2-oxobutanoate + formate + 2 H(+). It carries out the reaction 1,2-dihydroxy-5-(methylsulfanyl)pent-1-en-3-one + O2 = 3-(methylsulfanyl)propanoate + CO + formate + 2 H(+). The protein operates within amino-acid biosynthesis; L-methionine biosynthesis via salvage pathway; L-methionine from S-methyl-5-thio-alpha-D-ribose 1-phosphate: step 5/6. Catalyzes 2 different reactions between oxygen and the acireductone 1,2-dihydroxy-3-keto-5-methylthiopentene (DHK-MTPene) depending upon the metal bound in the active site. Fe-containing acireductone dioxygenase (Fe-ARD) produces formate and 2-keto-4-methylthiobutyrate (KMTB), the alpha-ketoacid precursor of methionine in the methionine recycle pathway. Ni-containing acireductone dioxygenase (Ni-ARD) produces methylthiopropionate, carbon monoxide and formate, and does not lie on the methionine recycle pathway. The chain is Acireductone dioxygenase 3 from Physcomitrium patens (Spreading-leaved earth moss).